The primary structure comprises 213 residues: Ribosomal RNA small subunit methyltransferase G (213 aa).

S-adenosyl-L-methionine is bound by residues Gly75, Phe80, 128-129 (IE), and Arg144.

The protein belongs to the methyltransferase superfamily. RNA methyltransferase RsmG family.

Its subcellular location is the cytoplasm. The enzyme catalyses guanosine(527) in 16S rRNA + S-adenosyl-L-methionine = N(7)-methylguanosine(527) in 16S rRNA + S-adenosyl-L-homocysteine. Specifically methylates the N7 position of guanine in position 527 of 16S rRNA. This is Ribosomal RNA small subunit methyltransferase G from Brucella suis biovar 1 (strain 1330).